Reading from the N-terminus, the 352-residue chain is Popeye domain-containing protein 1 (352 aa).

The Extracellular segment spans residues 1–38 (MSNTTSALPSSVPAVSLDPNATLCQDWEQSHHLLFHLA). 2 N-linked (GlcNAc...) asparagine glycosylation sites follow: N3 and N20. Residues 39-59 (NLSLGLGFLIPTTLALHMIFL) form a helical membrane-spanning segment. A topological domain (cytoplasmic) is located at residue R60. The chain crosses the membrane as a helical span at residues 61-81 (LLLMTGCSLFIAWATLYRCTL). D82 is a topological domain (extracellular). The chain crosses the membrane as a helical span at residues 83 to 103 (VMVWNVVFLLVNFMHFFFLLY). Topologically, residues 104 to 352 (KRRPIKIDRE…NVSKTTKKDI (249 aa)) are cytoplasmic. The interval 299–352 (ILRGGSTGSSLQKNPLTKTSTTMKPIEEGLEDDVFESESPTTSQNVSKTTKKDI) is disordered. Composition is skewed to polar residues over residues 306-321 (GSSL…STTM) and 336-346 (ESPTTSQNVSK).

It belongs to the popeye family. Expressed in skeletal muscle (at protein level).

The protein localises to the lateral cell membrane. It localises to the cell junction. Its subcellular location is the tight junction. The protein resides in the membrane. It is found in the cell membrane. The protein localises to the sarcolemma. It localises to the caveola. Cell adhesion molecule involved in the establishment and/or maintenance of cell integrity. Involved in skeletal muscle and heart development as well as in the maintenance of heart function. May play a role in vamp3-mediated vesicular transport and recycling of receptor molecules. Involved in the formation and regulation of the tight junction (TJ) paracellular permeability barrier in epithelial cells. May induce primordial adhesive contact and aggregation of epithelial cells in a Ca(2+)-independent manner. May be involved in epithelial movement during corneal sheet formation and regeneration. May play a role in the regulation of cell shape and movement by modulating the Rho-GTPase activity. May also be involved in striated muscle regeneration and in the regulation of cell spreading. The protein is Popeye domain-containing protein 1 (popdc1) of Danio rerio (Zebrafish).